The sequence spans 504 residues: UDP-N-acetylglucosamine--peptide N-acetylglucosaminyltransferase GtfA subunit (504 aa).

Residue 16–19 (GVEY) coordinates UDP. His-243 serves as a coordination point for N-acetyl-D-glucosamine. 385 to 386 (HK) provides a ligand contact to UDP. Position 405-408 (405-408 (EGFG)) interacts with N-acetyl-D-glucosamine.

It belongs to the glycosyltransferase group 1 family. Glycosyltransferase 4 subfamily. As to quaternary structure, interacts with stabilizing protein GtfB (Gtf1), probably via the N-terminus of this protein; probably forms a heterotetramer with 2 subunits each of GtfA and GtfB. Part of the accessory SecA2/SecY2 protein translocation apparatus.

Its subcellular location is the cytoplasm. The protein localises to the cell membrane. It carries out the reaction L-seryl-[protein] + UDP-N-acetyl-alpha-D-glucosamine = 3-O-[N-acetyl-alpha-D-glucosaminyl]-L-seryl-[protein] + UDP + H(+). It functions in the pathway protein modification; protein glycosylation. Required for polymorphic O-glycosylation of serine-rich repeat protein Fap1. Catalyzes the first step in glycosylation by transferring N-acetylglucosamine from UDP-GlcNAc to serine residues in Fap1. Part of the accessory SecA2/SecY2 system specifically required to export Fap1, a serine-rich fimbrial adhesin encoded upstream in the same operon. The GtfA-GtfB (Gtf1-Gtf2 in this bacteria) complex adds GlcNAc from UDP-GlcNAc to Fap1, attaching the first sugar residue. Cannot use not UDP-Glc as substrate. This subunit has very low glycosyltransferase activity; the GtfB stabilizing protein enhances membrane association, protease resistance and glycosyltransferase activity. The chain is UDP-N-acetylglucosamine--peptide N-acetylglucosaminyltransferase GtfA subunit from Streptococcus parasanguinis.